Reading from the N-terminus, the 509-residue chain is Glycogen synthase (509 aa).

Lys47 contacts ADP-alpha-D-glucose.

Belongs to the glycosyltransferase 1 family. Bacterial/plant glycogen synthase subfamily.

It carries out the reaction [(1-&gt;4)-alpha-D-glucosyl](n) + ADP-alpha-D-glucose = [(1-&gt;4)-alpha-D-glucosyl](n+1) + ADP + H(+). Its pathway is glycan biosynthesis; glycogen biosynthesis. Synthesizes alpha-1,4-glucan chains using ADP-glucose. This chain is Glycogen synthase, found in Xanthomonas oryzae pv. oryzae (strain PXO99A).